Consider the following 326-residue polypeptide: tRNA-modifying protein YgfZ (326 aa).

Folate-binding residues include Trp-27 and Trp-189.

This sequence belongs to the tRNA-modifying YgfZ family.

It localises to the cytoplasm. Functionally, folate-binding protein involved in regulating the level of ATP-DnaA and in the modification of some tRNAs. It is probably a key factor in regulatory networks that act via tRNA modification, such as initiation of chromosomal replication. The polypeptide is tRNA-modifying protein YgfZ (Shigella boydii serotype 4 (strain Sb227)).